The chain runs to 262 residues: Acyl-[acyl-carrier-protein]--UDP-N-acetylglucosamine O-acyltransferase (262 aa).

This sequence belongs to the transferase hexapeptide repeat family. LpxA subfamily. As to quaternary structure, homotrimer.

The protein resides in the cytoplasm. The catalysed reaction is a (3R)-hydroxyacyl-[ACP] + UDP-N-acetyl-alpha-D-glucosamine = a UDP-3-O-[(3R)-3-hydroxyacyl]-N-acetyl-alpha-D-glucosamine + holo-[ACP]. It functions in the pathway glycolipid biosynthesis; lipid IV(A) biosynthesis; lipid IV(A) from (3R)-3-hydroxytetradecanoyl-[acyl-carrier-protein] and UDP-N-acetyl-alpha-D-glucosamine: step 1/6. Involved in the biosynthesis of lipid A, a phosphorylated glycolipid that anchors the lipopolysaccharide to the outer membrane of the cell. This Photorhabdus laumondii subsp. laumondii (strain DSM 15139 / CIP 105565 / TT01) (Photorhabdus luminescens subsp. laumondii) protein is Acyl-[acyl-carrier-protein]--UDP-N-acetylglucosamine O-acyltransferase.